The chain runs to 521 residues: Cytochrome P450 monooxygenase ARMGADRAFT_1018420 (521 aa).

A helical membrane pass occupies residues 9 to 26; sequence VSPIWILTAIVVVAYTTV. Position 443 (cysteine 443) interacts with heme. Residue asparagine 450 is glycosylated (N-linked (GlcNAc...) asparagine).

This sequence belongs to the cytochrome P450 family. Heme serves as cofactor.

The protein resides in the membrane. Its pathway is secondary metabolite biosynthesis. Functionally, cytochrome P450 monooxygenase, part of the gene cluster that mediates the biosynthesis of melleolides, a range of antifungal and phytotoxic polyketide derivatives composed of an orsellinic acid (OA) moiety esterified to various sesquiterpene alcohols. The first step in melleolides biosynthesis is performed by the delta(6)-protoilludene synthase PRO1 which catalyzes the cyclization of farnesyl diphosphate to protoilludene. The orsellinic acid synthase armB produces OA by condensing acetyl-CoA with 3 malonyl-CoA units in a three-round chain elongation reaction folowed by a C2-C7 ring closure. ArmB further catalyzes the trans-esterification of OA to the various sesquiterpene alcohols resulting from the hydroxylation of protoilludene. The melleolides cluster also includes 5 cytochrome P450 monooxygenases, 4 NAD(+)-dependent oxidoreductases, one flavin-dependent oxidoreductase, and one O-methyltransferase. The cytochrome P450 monooxygenases may be involved in protoilludene hydroxylation to elaborate melleolides with multiple alcohol groups, such as melleolide D, which carries alcohol functionalities at C-4, C-5, C-10, and C-13. The role of the NAD(+)-dependent enzymes remains unknown. Numerous melleolides, including arnamial, show 5'-O-methylation of the aromatic moiety which may be catalyzed by the methyltransferase encoded in the cluster. The flavin-dependent oxidoreductase might represent the dehydrogenase yielding the aldehyde in position 1 of arnamial and other melleolides. Finally, several halogenase localized outside of the cluster, are able to catalyze the transfer of a single chlorine atom to the melleolide backbone, resulting in a 6'-chloromelleolide product. This Armillaria gallica (Bulbous honey fungus) protein is Cytochrome P450 monooxygenase ARMGADRAFT_1018420.